The following is a 426-amino-acid chain: Glutamyl-tRNA reductase (426 aa).

Residues 49-52 (TCNR), S109, 114-116 (EGQ), and Q120 contribute to the substrate site. Residue C50 is the Nucleophile of the active site. Residue 189 to 194 (GAGKMS) participates in NADP(+) binding.

Belongs to the glutamyl-tRNA reductase family. As to quaternary structure, homodimer.

The catalysed reaction is (S)-4-amino-5-oxopentanoate + tRNA(Glu) + NADP(+) = L-glutamyl-tRNA(Glu) + NADPH + H(+). It participates in porphyrin-containing compound metabolism; protoporphyrin-IX biosynthesis; 5-aminolevulinate from L-glutamyl-tRNA(Glu): step 1/2. Its pathway is porphyrin-containing compound metabolism; chlorophyll biosynthesis. Catalyzes the NADPH-dependent reduction of glutamyl-tRNA(Glu) to glutamate 1-semialdehyde (GSA). This chain is Glutamyl-tRNA reductase, found in Thermosynechococcus vestitus (strain NIES-2133 / IAM M-273 / BP-1).